We begin with the raw amino-acid sequence, 84 residues long: Small ribosomal subunit protein bS20 (84 aa).

This sequence belongs to the bacterial ribosomal protein bS20 family.

In terms of biological role, binds directly to 16S ribosomal RNA. The chain is Small ribosomal subunit protein bS20 from Parabacteroides distasonis (strain ATCC 8503 / DSM 20701 / CIP 104284 / JCM 5825 / NCTC 11152).